Here is a 312-residue protein sequence, read N- to C-terminus: Acetyl-coenzyme A carboxylase carboxyl transferase subunit alpha (312 aa).

The CoA carboxyltransferase C-terminal domain occupies Glu-36–Ala-286.

The protein belongs to the AccA family. Acetyl-CoA carboxylase is a heterohexamer composed of biotin carboxyl carrier protein (AccB), biotin carboxylase (AccC) and two subunits each of ACCase subunit alpha (AccA) and ACCase subunit beta (AccD).

It localises to the cytoplasm. The enzyme catalyses N(6)-carboxybiotinyl-L-lysyl-[protein] + acetyl-CoA = N(6)-biotinyl-L-lysyl-[protein] + malonyl-CoA. It participates in lipid metabolism; malonyl-CoA biosynthesis; malonyl-CoA from acetyl-CoA: step 1/1. In terms of biological role, component of the acetyl coenzyme A carboxylase (ACC) complex. First, biotin carboxylase catalyzes the carboxylation of biotin on its carrier protein (BCCP) and then the CO(2) group is transferred by the carboxyltransferase to acetyl-CoA to form malonyl-CoA. In Sulfurovum sp. (strain NBC37-1), this protein is Acetyl-coenzyme A carboxylase carboxyl transferase subunit alpha.